Consider the following 127-residue polypeptide: Glycine cleavage system H protein 1 (127 aa).

In terms of domain architecture, Lipoyl-binding spans 20–101 (LLTVGITAYA…LGEAWFFRFR (82 aa)). N6-lipoyllysine is present on Lys-60.

The protein belongs to the GcvH family. In terms of assembly, the glycine cleavage system is composed of four proteins: P, T, L and H. It depends on (R)-lipoate as a cofactor.

The glycine cleavage system catalyzes the degradation of glycine. The H protein shuttles the methylamine group of glycine from the P protein to the T protein. The protein is Glycine cleavage system H protein 1 of Pseudomonas aeruginosa (strain ATCC 15692 / DSM 22644 / CIP 104116 / JCM 14847 / LMG 12228 / 1C / PRS 101 / PAO1).